We begin with the raw amino-acid sequence, 291 residues long: Small ribosomal subunit protein uS2 (291 aa).

Residues 256 to 291 (STTAPPNWEATGGDWATSTAPAEGWAGDAPAGETKW) are disordered.

The protein belongs to the universal ribosomal protein uS2 family. In terms of assembly, component of the small ribosomal subunit. Mature ribosomes consist of a small (40S) and a large (60S) subunit. The 40S subunit contains about 33 different proteins and 1 molecule of RNA (18S). The 60S subunit contains about 49 different proteins and 3 molecules of RNA (25S, 5.8S and 5S). Interacts with RPS21.

The protein resides in the cytoplasm. Its function is as follows. Required for the assembly and/or stability of the 40S ribosomal subunit. Required for the processing of the 20S rRNA-precursor to mature 18S rRNA in a late step of the maturation of 40S ribosomal subunits. This is Small ribosomal subunit protein uS2 from Coccidioides immitis (strain RS) (Valley fever fungus).